The following is a 152-amino-acid chain: Catabolic 3-dehydroquinase (152 aa).

The Proton acceptor role is filled by Tyr24. Substrate-binding residues include Asn75, His81, and Asp88. Residue His101 is the Proton donor of the active site. Substrate contacts are provided by residues Ile102–Ser103 and Arg112.

Belongs to the type-II 3-dehydroquinase family. In terms of assembly, homododecamer. Adopts a ring-like structure, composed of an arrangement of two hexameric rings stacked on top of one another.

It carries out the reaction 3-dehydroquinate = 3-dehydroshikimate + H2O. Its pathway is aromatic compound metabolism; 3,4-dihydroxybenzoate biosynthesis; 3,4-dihydroxybenzoate from 3-dehydroquinate: step 1/2. In terms of biological role, is involved in the catabolism of quinate. Allows the utilization of quinate as carbon source via the beta-ketoadipate pathway. The polypeptide is Catabolic 3-dehydroquinase (Phaeosphaeria nodorum (strain SN15 / ATCC MYA-4574 / FGSC 10173) (Glume blotch fungus)).